Reading from the N-terminus, the 640-residue chain is Dextranase (640 aa).

Residues 1–32 (MPGTGLGRLAKRMTAAAAVFFISTSAVLPAQA) form the signal peptide. A propeptide spanning residues 33–49 (ATAPAAAPPGVPAALKA) is cleaved from the precursor. The tract at residues 248 to 269 (EQKERLVPTEESGSIHYPEPGE) is disordered.

It belongs to the glycosyl hydrolase 49 family.

The protein resides in the secreted. The catalysed reaction is Endohydrolysis of (1-&gt;6)-alpha-D-glucosidic linkages in dextran.. Its function is as follows. Efficiently decomposes water-insoluble glucan as well as dextran. This Arthrobacter sp. (strain CB-8) protein is Dextranase.